The sequence spans 203 residues: Nascent polypeptide-associated complex subunit alpha-like protein 1 (203 aa).

The span at 1-23 shows a compositional bias: basic and acidic residues; the sequence is MTTEEKEILAAKLEEQKIDLDKP. The tract at residues 1-71 is disordered; the sequence is MTTEEKEILA…SEKKSRKAML (71 aa). Acidic residues predominate over residues 24-50; the sequence is EVEDDDDNEDDDSDDDDKDDDEADGLD. Serine 36 bears the Phosphoserine mark. Residues 60 to 125 form the NAC-A/B domain; that stretch reads SRSEKKSRKA…AKIEDLSSQI (66 aa). One can recognise a UBA domain in the interval 158 to 203; it reads EVDEEGVEPKDIELVMTQAGVSRPNAVKALKAADGDIVSAIMELTT.

The protein belongs to the NAC-alpha family.

Functionally, may promote appropriate targeting of ribosome-nascent polypeptide complexes. In Arabidopsis thaliana (Mouse-ear cress), this protein is Nascent polypeptide-associated complex subunit alpha-like protein 1.